Consider the following 451-residue polypeptide: D-aminoacyl-tRNA deacylase (451 aa).

The disordered stretch occupies residues 410–437; that stretch reads RTADIPEGPKFGKLASGESVEIDGEEID.

It belongs to the DtdA deacylase family. Monomer. Zn(2+) is required as a cofactor.

The enzyme catalyses a D-aminoacyl-tRNA + H2O = a tRNA + a D-alpha-amino acid + H(+). It catalyses the reaction glycyl-tRNA(Ala) + H2O = tRNA(Ala) + glycine + H(+). In terms of biological role, D-aminoacyl-tRNA deacylase with broad substrate specificity. By recycling D-aminoacyl-tRNA to D-amino acids and free tRNA molecules, this enzyme counteracts the toxicity associated with the formation of D-aminoacyl-tRNA entities in vivo. The protein is D-aminoacyl-tRNA deacylase of Haloarcula marismortui (strain ATCC 43049 / DSM 3752 / JCM 8966 / VKM B-1809) (Halobacterium marismortui).